The following is a 306-amino-acid chain: Acetaldehyde dehydrogenase (306 aa).

An NAD(+)-binding site is contributed by 12–15 (SGNI). The active-site Acyl-thioester intermediate is Cys-127. Residues 158 to 166 (SAGPGTRAN) and Asn-277 contribute to the NAD(+) site.

The protein belongs to the acetaldehyde dehydrogenase family.

The enzyme catalyses acetaldehyde + NAD(+) + CoA = acetyl-CoA + NADH + H(+). The protein is Acetaldehyde dehydrogenase of Mycolicibacterium gilvum (strain PYR-GCK) (Mycobacterium gilvum (strain PYR-GCK)).